The primary structure comprises 143 residues: Transcriptional regulator SlyA (143 aa).

The HTH marR-type domain occupies 2 to 135 (ESTLGSDLAR…LSTLVQKLEQ (134 aa)). A DNA-binding region (H-T-H motif) is located at residues 49 to 72 (QIQLAKAIGIEQPSLVRTLDQLEE).

Belongs to the SlyA family. As to quaternary structure, homodimer.

Transcription regulator that can specifically activate or repress expression of target genes. Regulates the cpm operon, which contains cpmA, cpmB, cpmC, cpmD, cpmE, cpmF, cpmG and cpmH, involved in carbapenem-like antibiotic production. The protein is Transcriptional regulator SlyA of Photorhabdus laumondii subsp. laumondii (strain DSM 15139 / CIP 105565 / TT01) (Photorhabdus luminescens subsp. laumondii).